The following is a 43-amino-acid chain: MIELSLIDFYLCFLAFLLFLVLIMLIIFWFSLELQDHNETCHA.

A helical transmembrane segment spans residues 9 to 29 (FYLCFLAFLLFLVLIMLIIFW).

It localises to the host Golgi apparatus membrane. Its subcellular location is the host endosome membrane. This chain is ORF7b protein, found in Homo sapiens (Human).